The primary structure comprises 122 residues: Large ribosomal subunit protein uL14 (122 aa).

It belongs to the universal ribosomal protein uL14 family. In terms of assembly, part of the 50S ribosomal subunit. Forms a cluster with proteins L3 and L19. In the 70S ribosome, L14 and L19 interact and together make contacts with the 16S rRNA in bridges B5 and B8.

Functionally, binds to 23S rRNA. Forms part of two intersubunit bridges in the 70S ribosome. In Acidiphilium cryptum (strain JF-5), this protein is Large ribosomal subunit protein uL14.